We begin with the raw amino-acid sequence, 374 residues long: Dual-specificity RNA methyltransferase RlmN (374 aa).

Glu94 acts as the Proton acceptor in catalysis. The region spanning 100 to 339 is the Radical SAM core domain; sequence EEDRATLCVS…VTIRKTRGDD (240 aa). Cys107 and Cys344 are joined by a disulfide. Residues Cys114, Cys118, and Cys121 each contribute to the [4Fe-4S] cluster site. Residues 168–169, Ser200, 222–224, and Asn301 each bind S-adenosyl-L-methionine; these read GE and SLH. Catalysis depends on Cys344, which acts as the S-methylcysteine intermediate.

The protein belongs to the radical SAM superfamily. RlmN family. Requires [4Fe-4S] cluster as cofactor.

It is found in the cytoplasm. The enzyme catalyses adenosine(2503) in 23S rRNA + 2 reduced [2Fe-2S]-[ferredoxin] + 2 S-adenosyl-L-methionine = 2-methyladenosine(2503) in 23S rRNA + 5'-deoxyadenosine + L-methionine + 2 oxidized [2Fe-2S]-[ferredoxin] + S-adenosyl-L-homocysteine. The catalysed reaction is adenosine(37) in tRNA + 2 reduced [2Fe-2S]-[ferredoxin] + 2 S-adenosyl-L-methionine = 2-methyladenosine(37) in tRNA + 5'-deoxyadenosine + L-methionine + 2 oxidized [2Fe-2S]-[ferredoxin] + S-adenosyl-L-homocysteine. Functionally, specifically methylates position 2 of adenine 2503 in 23S rRNA and position 2 of adenine 37 in tRNAs. m2A2503 modification seems to play a crucial role in the proofreading step occurring at the peptidyl transferase center and thus would serve to optimize ribosomal fidelity. The chain is Dual-specificity RNA methyltransferase RlmN from Vibrio vulnificus (strain CMCP6).